The chain runs to 505 residues: Xylose import ATP-binding protein XylG (505 aa).

ABC transporter domains are found at residues 6 to 243 and 262 to 505; these read LEMR…VGRE and VKNY…TGGK. 38 to 45 provides a ligand contact to ATP; sequence GENGAGKS.

It belongs to the ABC transporter superfamily. Xylose importer (TC 3.A.1.2.4) family. As to quaternary structure, the complex is composed of two ATP-binding proteins (XylG), two transmembrane proteins (XylH) and a solute-binding protein (XylF).

The protein localises to the cell membrane. The enzyme catalyses D-xylose(out) + ATP + H2O = D-xylose(in) + ADP + phosphate + H(+). Its function is as follows. Part of the ABC transporter complex XylFGH involved in xylose import. Responsible for energy coupling to the transport system. The sequence is that of Xylose import ATP-binding protein XylG from Thermoanaerobacter pseudethanolicus (strain ATCC 33223 / 39E) (Clostridium thermohydrosulfuricum).